The following is a 218-amino-acid chain: MKNMLLLSSSKYKNTGYLEHTIPWLQNFLADYRGKTIAFVPYAGVSRTFDEYEKTVQNALSDLGMNIVSVHRGKQHRDIIEQADVIAIGGGNTFCLLKQLYEHNLIDIIREKVNNGTPYFGWSAGANVAGSSIMTTNDMPITYPPSFQALQLFPHQINPHFISGKMQGHNGESREERLAEFLLVNPTALVYALPEGSALHIQNGMGNRIGRKSYFVLQ.

Catalysis depends on charge relay system residues S123, D138, and H160.

This sequence belongs to the peptidase S51 family.

It localises to the cytoplasm. The enzyme catalyses Dipeptidase E catalyzes the hydrolysis of dipeptides Asp-|-Xaa. It does not act on peptides with N-terminal Glu, Asn or Gln, nor does it cleave isoaspartyl peptides.. In terms of biological role, hydrolyzes dipeptides containing N-terminal aspartate residues. May play a role in allowing the cell to use peptide aspartate to spare carbon otherwise required for the synthesis of the aspartate family of amino acids. The polypeptide is Peptidase E (Haemophilus influenzae (strain ATCC 51907 / DSM 11121 / KW20 / Rd)).